We begin with the raw amino-acid sequence, 281 residues long: Acetylglutamate kinase (281 aa).

Substrate-binding positions include 64 to 65 (GG), arginine 86, and asparagine 179.

This sequence belongs to the acetylglutamate kinase family. ArgB subfamily.

The protein localises to the cytoplasm. It carries out the reaction N-acetyl-L-glutamate + ATP = N-acetyl-L-glutamyl 5-phosphate + ADP. It functions in the pathway amino-acid biosynthesis; L-arginine biosynthesis; N(2)-acetyl-L-ornithine from L-glutamate: step 2/4. Functionally, catalyzes the ATP-dependent phosphorylation of N-acetyl-L-glutamate. This is Acetylglutamate kinase from Campylobacter curvus (strain 525.92).